The following is a 150-amino-acid chain: N-alpha-acetyltransferase 30 (150 aa).

Residues 2–150 enclose the N-acetyltransferase domain; sequence VTIVPYSHQY…DAFRYILYPN (149 aa).

The protein belongs to the acetyltransferase family. MAK3 subfamily.

It localises to the cytoplasm. The protein resides in the nucleus. It catalyses the reaction N-terminal L-methionyl-L-leucyl-[protein] + acetyl-CoA = N-terminal N(alpha)-acetyl-L-methionyl-L-leucyl-[protein] + CoA + H(+). The enzyme catalyses N-terminal L-methionyl-L-isoleucyl-[protein] + acetyl-CoA = N-terminal N(alpha)-acetyl-L-methionyl-L-isoleucyl-[protein] + CoA + H(+). The catalysed reaction is N-terminal L-methionyl-L-phenylalanyl-[protein] + acetyl-CoA = N-terminal N(alpha)-acetyl-L-methionyl-L-phenylalanyl-[protein] + CoA + H(+). It carries out the reaction N-terminal L-methionyl-L-tryptophyl-[protein] + acetyl-CoA = N-terminal N(alpha)-acetyl-L-methionyl-L-tryptophyl-[protein] + CoA + H(+). It catalyses the reaction N-terminal L-methionyl-L-tyrosyl-[protein] + acetyl-CoA = N-terminal N(alpha)-acetyl-L-methionyl-L-tyrosyl-[protein] + CoA + H(+). In terms of biological role, catalytic component of the NatC N-terminal acetyltransferase. The chain is N-alpha-acetyltransferase 30 (naa30) from Schizosaccharomyces pombe (strain 972 / ATCC 24843) (Fission yeast).